A 186-amino-acid chain; its full sequence is Large ribosomal subunit protein uL10 (186 aa).

As to quaternary structure, part of the ribosomal stalk of the 50S ribosomal subunit. The N-terminus interacts with L11 and the large rRNA to form the base of the stalk. The C-terminus forms an elongated spine to which L12 dimers bind in a sequential fashion forming a multimeric L10(L12)X complex.

Its function is as follows. Forms part of the ribosomal stalk, playing a central role in the interaction of the ribosome with GTP-bound translation factors. This is Large ribosomal subunit protein uL10 from Rhodopseudomonas palustris (strain ATCC BAA-98 / CGA009).